A 311-amino-acid chain; its full sequence is Ribosomal RNA small subunit methyltransferase H (311 aa).

S-adenosyl-L-methionine is bound by residues 34–36 (GGY), Asp51, Phe75, Asp93, and Gln100.

Belongs to the methyltransferase superfamily. RsmH family.

It localises to the cytoplasm. The catalysed reaction is cytidine(1402) in 16S rRNA + S-adenosyl-L-methionine = N(4)-methylcytidine(1402) in 16S rRNA + S-adenosyl-L-homocysteine + H(+). Functionally, specifically methylates the N4 position of cytidine in position 1402 (C1402) of 16S rRNA. This Caulobacter vibrioides (strain ATCC 19089 / CIP 103742 / CB 15) (Caulobacter crescentus) protein is Ribosomal RNA small subunit methyltransferase H.